The sequence spans 1347 residues: BTB/POZ domain-containing protein 1 (1347 aa).

ANK repeat units lie at residues 51-81 (YGRT…DVFV) and 86-115 (SGYT…SFRS). RCC1 repeat units lie at residues 148–198 (GNEL…DKIL), 215–264 (SQNV…ALTK), 265–322 (FGSI…AWTD), and 324–372 (DIYS…CLLQ). BTB domains follow at residues 619 to 698 (SDVT…LSPW) and 758 to 829 (MDTV…VELF). Disordered regions lie at residues 1006–1029 (SSNQ…NVVN), 1104–1139 (EKAD…SKQV), 1193–1237 (EGSS…PLSI), and 1286–1347 (GILK…RAVK). Residues 1013–1023 (LNKEDAEEKSP) show a composition bias toward basic and acidic residues. Polar residues-rich tracts occupy residues 1208-1237 (SNGS…PLSI) and 1297-1306 (NRKQGQASKQ). Basic residues predominate over residues 1336 to 1347 (TTHKKGKARAVK).

Interacts with cul3.

The protein operates within protein modification; protein ubiquitination. Functionally, probable substrate-specific adapter of an E3 ubiquitin-protein ligase complex which mediates the ubiquitination and subsequent proteasomal degradation of target proteins. This chain is BTB/POZ domain-containing protein 1 (btb1), found in Schizosaccharomyces pombe (strain 972 / ATCC 24843) (Fission yeast).